Here is a 300-residue protein sequence, read N- to C-terminus: Acetaldehyde dehydrogenase (300 aa).

11-14 contributes to the NAD(+) binding site; it reads SGNI. The Acyl-thioester intermediate role is filled by cysteine 129. NAD(+) is bound by residues 160 to 168 and asparagine 271; that span reads SVGPGTRQN.

The protein belongs to the acetaldehyde dehydrogenase family.

It carries out the reaction acetaldehyde + NAD(+) + CoA = acetyl-CoA + NADH + H(+). The chain is Acetaldehyde dehydrogenase (mhpF) from Pseudoalteromonas translucida (strain TAC 125).